The following is a 343-amino-acid chain: Heat-inducible transcription repressor HrcA (343 aa).

It belongs to the HrcA family.

In terms of biological role, negative regulator of class I heat shock genes (grpE-dnaK-dnaJ and groELS operons). Prevents heat-shock induction of these operons. This Bacillus cytotoxicus (strain DSM 22905 / CIP 110041 / 391-98 / NVH 391-98) protein is Heat-inducible transcription repressor HrcA.